Here is a 230-residue protein sequence, read N- to C-terminus: Acyl-protein thioesterase 1 (230 aa).

Active-site charge relay system residues include S119, D174, and H208. K224 bears the N6-acetyllysine mark.

Belongs to the AB hydrolase superfamily. AB hydrolase 2 family. As to quaternary structure, homodimer.

The protein resides in the cytoplasm. The protein localises to the cell membrane. It localises to the nucleus membrane. Its subcellular location is the endoplasmic reticulum. The enzyme catalyses S-hexadecanoyl-L-cysteinyl-[protein] + H2O = L-cysteinyl-[protein] + hexadecanoate + H(+). The catalysed reaction is 1-hexadecanoyl-sn-glycero-3-phosphocholine + H2O = sn-glycerol 3-phosphocholine + hexadecanoate + H(+). It catalyses the reaction a 1-(9Z-octadecenoyl)-2-acyl-sn-glycero-3-phosphocholine + H2O = a 2-acyl-sn-glycero-3-phosphocholine + (9Z)-octadecenoate + H(+). Acts as an acyl-protein thioesterase. Hydrolyzes fatty acids from S-acylated cysteine residues in proteins such as trimeric G alpha proteins or HRAS. Acts as a palmitoyl thioesterase that catalyzes depalmitoylation of proteins, such as ADRB2, KCNMA1 and SQSTM1. Acts as a negative regulator of autophagy by mediating palmitoylation of SQSTM1, decreasing affinity between SQSTM1 and ATG8 proteins and recruitment of ubiquitinated cargo proteins to autophagosomes. Acts as a lysophospholipase and hydrolyzes lysophosphatidylcholine (lyso-PC). Also hydrolyzes lysophosphatidylethanolamine (lyso-PE), lysophosphatidylinositol (lyso-PI) and lysophosphatidylserine (lyso-PS). Has much higher thioesterase activity than lysophospholipase activity. Contributes to the production of lysophosphatidic acid (LPA) during blood coagulation by recognizing and cleaving plasma phospholipids to generate lysophospholipids which in turn act as substrates for ENPP2 to produce LPA. This is Acyl-protein thioesterase 1 (LYPLA1) from Pongo abelii (Sumatran orangutan).